Reading from the N-terminus, the 510-residue chain is Ribonuclease Y (510 aa).

The helical transmembrane segment at 2-22 (IYIIFSSIFAGFILGFLVRVF) threads the bilayer. Positions 198–258 (TVASVELPND…IRKELAKRTL (61 aa)) constitute a KH domain. An HD domain is found at 324–419 (VLSHSKETAI…VQIADAISAS (96 aa)).

The protein belongs to the RNase Y family.

Its subcellular location is the cell membrane. In terms of biological role, endoribonuclease that initiates mRNA decay. The chain is Ribonuclease Y from Borreliella burgdorferi (strain ATCC 35210 / DSM 4680 / CIP 102532 / B31) (Borrelia burgdorferi).